A 257-amino-acid chain; its full sequence is MVLIRVLANLLLLQLSYAQKSSELVIGGDECNINEHPFLAFVTSDRRRCAGTLINQEWVLTAAHCNGKYMKIELGVHDKMVRNEDKQTRVPKQKFFCLSSKEYTMWDKDIMLIRLNTPVNNSTHIAPVSLASRPPVVGSVCRIMGWGTISSPKVILPDVPHCANIEIIKYSKCQGVHPELPAKGRVVCAGIWQGGKDSCHGDSGAPLICNGQLQGLLSWGGDPCAQPLQPGLYTDIFDYSDWIQSIIAGNTTATCPP.

Positions 1 to 18 (MVLIRVLANLLLLQLSYA) are cleaved as a signal peptide. Positions 19–24 (QKSSEL) are excised as a propeptide. A Peptidase S1 domain is found at 25–248 (VIGGDECNIN…YSDWIQSIIA (224 aa)). 6 disulfides stabilise this stretch: Cys31–Cys162, Cys49–Cys65, Cys97–Cys255, Cys141–Cys209, Cys173–Cys188, and Cys199–Cys224. Residues His64 and Asp109 each act as charge relay system in the active site. Asn120 and Asn121 each carry an N-linked (GlcNAc...) asparagine glycan. The active-site Charge relay system is Ser203. Residue Asn250 is glycosylated (N-linked (GlcNAc...) asparagine).

Belongs to the peptidase S1 family. Snake venom subfamily. In terms of assembly, monomer. As to expression, expressed by the venom gland.

The protein resides in the secreted. Functionally, snake venom serine protease that may act in the hemostasis system of the prey. This is Snake venom serine protease nikobin (sp-VN) from Vipera nikolskii (Nikolsky's adder).